Consider the following 547-residue polypeptide: Glucose-6-phosphate isomerase (547 aa).

E355 acts as the Proton donor in catalysis. Active-site residues include H386 and K512.

It belongs to the GPI family.

The protein localises to the cytoplasm. It carries out the reaction alpha-D-glucose 6-phosphate = beta-D-fructose 6-phosphate. Its pathway is carbohydrate biosynthesis; gluconeogenesis. It functions in the pathway carbohydrate degradation; glycolysis; D-glyceraldehyde 3-phosphate and glycerone phosphate from D-glucose: step 2/4. Functionally, catalyzes the reversible isomerization of glucose-6-phosphate to fructose-6-phosphate. The polypeptide is Glucose-6-phosphate isomerase (Corynebacterium diphtheriae (strain ATCC 700971 / NCTC 13129 / Biotype gravis)).